The chain runs to 967 residues: RNA polymerase-associated protein RapA (967 aa).

The Helicase ATP-binding domain maps to 163 to 333; it reads EVGQRHAPRV…FARLRLLDPN (171 aa). 176-183 is an ATP binding site; sequence DEVGLGKT. The DEAH box motif lies at 279-282; that stretch reads DEAH. Residues 489-643 enclose the Helicase C-terminal domain; sequence RVEWLLNYLT…TCPTGRTIYD (155 aa).

It belongs to the SNF2/RAD54 helicase family. RapA subfamily. In terms of assembly, interacts with the RNAP. Has a higher affinity for the core RNAP than for the holoenzyme. Its ATPase activity is stimulated by binding to RNAP.

In terms of biological role, transcription regulator that activates transcription by stimulating RNA polymerase (RNAP) recycling in case of stress conditions such as supercoiled DNA or high salt concentrations. Probably acts by releasing the RNAP, when it is trapped or immobilized on tightly supercoiled DNA. Does not activate transcription on linear DNA. Probably not involved in DNA repair. This Pectobacterium carotovorum subsp. carotovorum (strain PC1) protein is RNA polymerase-associated protein RapA.